Reading from the N-terminus, the 371-residue chain is tRNA-specific 2-thiouridylase MnmA (371 aa).

ATP-binding positions include 13–20 (GMSGGVDS) and methionine 39. An interaction with target base in tRNA region spans residues 99–101 (NPD). Cysteine 104 acts as the Nucleophile in catalysis. A disulfide bridge links cysteine 104 with cysteine 200. Glycine 128 contacts ATP. Residues 150–152 (KDQ) are interaction with tRNA. Cysteine 200 functions as the Cysteine persulfide intermediate in the catalytic mechanism. Residues 309 to 310 (RY) form an interaction with tRNA region.

The protein belongs to the MnmA/TRMU family.

Its subcellular location is the cytoplasm. The enzyme catalyses S-sulfanyl-L-cysteinyl-[protein] + uridine(34) in tRNA + AH2 + ATP = 2-thiouridine(34) in tRNA + L-cysteinyl-[protein] + A + AMP + diphosphate + H(+). Catalyzes the 2-thiolation of uridine at the wobble position (U34) of tRNA, leading to the formation of s(2)U34. In Bacillus subtilis (strain 168), this protein is tRNA-specific 2-thiouridylase MnmA.